The sequence spans 100 residues: Integration host factor subunit alpha (100 aa).

It belongs to the bacterial histone-like protein family. In terms of assembly, heterodimer of an alpha and a beta chain.

In terms of biological role, this protein is one of the two subunits of integration host factor, a specific DNA-binding protein that functions in genetic recombination as well as in transcriptional and translational control. The protein is Integration host factor subunit alpha of Cereibacter sphaeroides (strain ATCC 17023 / DSM 158 / JCM 6121 / CCUG 31486 / LMG 2827 / NBRC 12203 / NCIMB 8253 / ATH 2.4.1.) (Rhodobacter sphaeroides).